The chain runs to 514 residues: Flagellin B (514 aa).

The protein belongs to the bacterial flagellin family. Heteromer of FlaA and FlaB. FlaB is located proximal to the hook while the remainder of the filament is composed of the predominant FlaA.

It localises to the secreted. It is found in the bacterial flagellum. In terms of biological role, flagellin is the subunit protein which polymerizes to form the filaments of bacterial flagella. Important for motility and virulence. The chain is Flagellin B (flaB) from Helicobacter pylori (strain J99 / ATCC 700824) (Campylobacter pylori J99).